The following is a 322-amino-acid chain: tRNA dimethylallyltransferase (322 aa).

18 to 25 (GPTASGKS) lines the ATP pocket. 20–25 (TASGKS) lines the substrate pocket. 2 interaction with substrate tRNA regions span residues 43 to 46 (DSRQ) and 167 to 171 (QRLVR).

Belongs to the IPP transferase family. Monomer. Requires Mg(2+) as cofactor.

The catalysed reaction is adenosine(37) in tRNA + dimethylallyl diphosphate = N(6)-dimethylallyladenosine(37) in tRNA + diphosphate. In terms of biological role, catalyzes the transfer of a dimethylallyl group onto the adenine at position 37 in tRNAs that read codons beginning with uridine, leading to the formation of N6-(dimethylallyl)adenosine (i(6)A). This Chlorobium phaeobacteroides (strain BS1) protein is tRNA dimethylallyltransferase.